A 245-amino-acid chain; its full sequence is Sugar fermentation stimulation protein homolog (245 aa).

The protein belongs to the SfsA family.

The protein is Sugar fermentation stimulation protein homolog of Yersinia pseudotuberculosis serotype I (strain IP32953).